Consider the following 167-residue polypeptide: Phospholipase A2 (167 aa).

3 residues coordinate Ca(2+): tryptophan 38, glycine 40, and glycine 42. 5 disulfides stabilise this stretch: cysteine 39–cysteine 61, cysteine 60–cysteine 99, cysteine 67–cysteine 92, cysteine 90–cysteine 127, and cysteine 132–cysteine 144. Asparagine 47 is a glycosylation site (N-linked (GlcNAc...) asparagine). Residue histidine 64 is part of the active site. Aspartate 65 provides a ligand contact to Ca(2+). A propeptide spanning residues 136–140 (ARSAR) is cleaved from the precursor.

It belongs to the phospholipase A2 family. Group III subfamily. As to quaternary structure, heterodimer composed of a large subunit and a small subunit; disulfide-linked. Ca(2+) serves as cofactor. In terms of tissue distribution, expressed by the venom gland.

It localises to the secreted. The catalysed reaction is a 1,2-diacyl-sn-glycero-3-phosphocholine + H2O = a 1-acyl-sn-glycero-3-phosphocholine + a fatty acid + H(+). Phospholipase toxin, which catalyzes the calcium-dependent hydrolysis of the 2-acyl groups in 3-sn-phosphoglycerides. Inhibits both skeletal (RYR1) and cardiac (RYR2) ryanodine receptors (calcium release channels). Probably blocks ryanodine receptors by generating a lipid product. Shows hemolytic activity, but it is not know if it is direct or indirect. This is Phospholipase A2 from Hottentotta tamulus (Eastern Indian scorpion).